Consider the following 95-residue polypeptide: Aspartyl/glutamyl-tRNA(Asn/Gln) amidotransferase subunit C (95 aa).

This sequence belongs to the GatC family. Heterotrimer of A, B and C subunits.

It carries out the reaction L-glutamyl-tRNA(Gln) + L-glutamine + ATP + H2O = L-glutaminyl-tRNA(Gln) + L-glutamate + ADP + phosphate + H(+). The catalysed reaction is L-aspartyl-tRNA(Asn) + L-glutamine + ATP + H2O = L-asparaginyl-tRNA(Asn) + L-glutamate + ADP + phosphate + 2 H(+). Functionally, allows the formation of correctly charged Asn-tRNA(Asn) or Gln-tRNA(Gln) through the transamidation of misacylated Asp-tRNA(Asn) or Glu-tRNA(Gln) in organisms which lack either or both of asparaginyl-tRNA or glutaminyl-tRNA synthetases. The reaction takes place in the presence of glutamine and ATP through an activated phospho-Asp-tRNA(Asn) or phospho-Glu-tRNA(Gln). This is Aspartyl/glutamyl-tRNA(Asn/Gln) amidotransferase subunit C from Syntrophotalea carbinolica (strain DSM 2380 / NBRC 103641 / GraBd1) (Pelobacter carbinolicus).